The sequence spans 347 residues: DNA-directed RNA polymerase subunit alpha (347 aa).

The alpha N-terminal domain (alpha-NTD) stretch occupies residues 1–243 (MLIKQGERLI…DQISVFINFD (243 aa)). Residues 260–347 (VNEHLFKSID…EWKRKQQNEA (88 aa)) are alpha C-terminal domain (alpha-CTD).

The protein belongs to the RNA polymerase alpha chain family. As to quaternary structure, homodimer. The RNAP catalytic core consists of 2 alpha, 1 beta, 1 beta' and 1 omega subunit. When a sigma factor is associated with the core the holoenzyme is formed, which can initiate transcription.

The enzyme catalyses RNA(n) + a ribonucleoside 5'-triphosphate = RNA(n+1) + diphosphate. In terms of biological role, DNA-dependent RNA polymerase catalyzes the transcription of DNA into RNA using the four ribonucleoside triphosphates as substrates. The protein is DNA-directed RNA polymerase subunit alpha of Desulfovibrio desulfuricans (strain ATCC 27774 / DSM 6949 / MB).